The chain runs to 280 residues: Adenosylcobinamide-GDP ribazoletransferase (280 aa).

The next 6 membrane-spanning stretches (helical) occupy residues Tyr4–Met24, Val39–Phe59, Gly61–Leu81, Thr108–Ile128, Phe196–Leu216, and Thr255–Phe275.

It belongs to the CobS family. Requires Mg(2+) as cofactor.

Its subcellular location is the cell membrane. It carries out the reaction alpha-ribazole + adenosylcob(III)inamide-GDP = adenosylcob(III)alamin + GMP + H(+). The catalysed reaction is alpha-ribazole 5'-phosphate + adenosylcob(III)inamide-GDP = adenosylcob(III)alamin 5'-phosphate + GMP + H(+). The protein operates within cofactor biosynthesis; adenosylcobalamin biosynthesis; adenosylcobalamin from cob(II)yrinate a,c-diamide: step 7/7. Joins adenosylcobinamide-GDP and alpha-ribazole to generate adenosylcobalamin (Ado-cobalamin). Also synthesizes adenosylcobalamin 5'-phosphate from adenosylcobinamide-GDP and alpha-ribazole 5'-phosphate. This Methanosarcina barkeri (strain Fusaro / DSM 804) protein is Adenosylcobinamide-GDP ribazoletransferase.